Here is a 101-residue protein sequence, read N- to C-terminus: Small ribosomal subunit protein uS14 (101 aa).

It belongs to the universal ribosomal protein uS14 family. As to quaternary structure, part of the 30S ribosomal subunit. Contacts proteins S3 and S10.

In terms of biological role, binds 16S rRNA, required for the assembly of 30S particles and may also be responsible for determining the conformation of the 16S rRNA at the A site. The sequence is that of Small ribosomal subunit protein uS14 from Shewanella baltica (strain OS155 / ATCC BAA-1091).